A 525-amino-acid chain; its full sequence is MPSNNLIKNALISVSDKKNIVEVAEKLIINKINLFSTGGTAQILKKNNIPVTEISDYTKFPEIMDGRVKTLHPKIMGGILGQKQKDQEIMKLYNICPIDIVIVNFYPFEKIKNIKKNDIDNVVNNIDIGGPTLVRASAKNYKNVIVIVDLDDFQSTIDSINNNTMNMEKRFNLASKAFEYTSYYEQIISQYFIEQNSLYKKTNNSLFPNEINFSFIKKQDLRYGENYHQKSSFYIEKNMCDSGTISTACQIQGKTLSYNNISDSDIALECVKQFTKPACVIVKHGNPCSVAVSHNILESYLSAYNSDPISAFGGIISFNCKLDEKTAQTIINQQFVEVIIIPEISKKAVKILQKKQNIRVLVTGKLQNNTVGLDLKKITNGLLVQEYDSHNIDYNSWSFVTKRSPTKKELKDSIFCWQVAKFVKSNAIVYGSDEITIGIGAGQMSRIYSTKLANIKVKDQGKNIIGATMASDAFFPFRDGIDEAASVGISSIIQPGGSIRDEEIIRAADEHNITMIFTKKRHFKH.

Residues 1–148 enclose the MGS-like domain; sequence MPSNNLIKNA…KNYKNVIVIV (148 aa).

The protein belongs to the PurH family.

The enzyme catalyses (6R)-10-formyltetrahydrofolate + 5-amino-1-(5-phospho-beta-D-ribosyl)imidazole-4-carboxamide = 5-formamido-1-(5-phospho-D-ribosyl)imidazole-4-carboxamide + (6S)-5,6,7,8-tetrahydrofolate. The catalysed reaction is IMP + H2O = 5-formamido-1-(5-phospho-D-ribosyl)imidazole-4-carboxamide. It participates in purine metabolism; IMP biosynthesis via de novo pathway; 5-formamido-1-(5-phospho-D-ribosyl)imidazole-4-carboxamide from 5-amino-1-(5-phospho-D-ribosyl)imidazole-4-carboxamide (10-formyl THF route): step 1/1. It functions in the pathway purine metabolism; IMP biosynthesis via de novo pathway; IMP from 5-formamido-1-(5-phospho-D-ribosyl)imidazole-4-carboxamide: step 1/1. The chain is Bifunctional purine biosynthesis protein PurH from Buchnera aphidicola subsp. Acyrthosiphon pisum (strain APS) (Acyrthosiphon pisum symbiotic bacterium).